Consider the following 230-residue polypeptide: 2,3-bisphosphoglycerate-dependent phosphoglycerate mutase (230 aa).

Residues 8-15, 21-22, arginine 60, 87-90, lysine 98, 114-115, and 183-184 contribute to the substrate site; these read RHGESEWN, TG, ERHY, RR, and GN. The active-site Tele-phosphohistidine intermediate is histidine 9. Catalysis depends on glutamate 87, which acts as the Proton donor/acceptor.

This sequence belongs to the phosphoglycerate mutase family. BPG-dependent PGAM subfamily.

It catalyses the reaction (2R)-2-phosphoglycerate = (2R)-3-phosphoglycerate. It functions in the pathway carbohydrate degradation; glycolysis; pyruvate from D-glyceraldehyde 3-phosphate: step 3/5. In terms of biological role, catalyzes the interconversion of 2-phosphoglycerate and 3-phosphoglycerate. This chain is 2,3-bisphosphoglycerate-dependent phosphoglycerate mutase, found in Streptococcus mutans serotype c (strain ATCC 700610 / UA159).